Here is a 383-residue protein sequence, read N- to C-terminus: Na(+)/H(+) antiporter NhaA (383 aa).

A run of 11 helical transmembrane segments spans residues 10–30, 56–76, 91–111, 121–141, 150–170, 174–194, 206–226, 254–274, 289–308, 327–347, and 355–375; these read LIGGLILFSAALLAIVVNNSP, LMHWINDGLMAIYFLYIGLEI, IITPAIAAFAGLAMPSLIYLS, GWAIPSATDIAFTLGILALLG, LLVITIAIFDDIAAIAIIAIF, SLSLLSLSLGTLFILAMIICN, VVLGFFAWFCTIKSGVHATLA, PWIIYFILPVFAFANAGISFS, IIWGLFVGKQLGIFSILAVF, GISLLCGIGFTMSLFIGVLAF, and AIKIGVVVGSVLSGFFGYIVL.

This sequence belongs to the NhaA Na(+)/H(+) (TC 2.A.33) antiporter family.

Its subcellular location is the cell inner membrane. It carries out the reaction Na(+)(in) + 2 H(+)(out) = Na(+)(out) + 2 H(+)(in). Its function is as follows. Na(+)/H(+) antiporter that extrudes sodium in exchange for external protons. This Francisella tularensis subsp. mediasiatica (strain FSC147) protein is Na(+)/H(+) antiporter NhaA.